A 258-amino-acid polypeptide reads, in one-letter code: Meiotic drive suppressor wtf20 (258 aa).

Residues 1 to 71 (MKNNYTSLKS…GPTEIANPNV (71 aa)) are disordered. The segment covering 19–30 (KTDHEIDLEKGL) has biased composition (basic and acidic residues). 3 helical membrane-spanning segments follow: residues 84–106 (IYFL…TAWV), 121–140 (FSVT…FYFY), and 196–216 (SASA…AETV).

The protein belongs to the WTF family. In terms of assembly, homomer. Interacts with other proteins that exhibit high sequence similarity.

Its subcellular location is the spore membrane. It localises to the vacuole membrane. In terms of biological role, acts as a suppressor component of the dual wtf meiotic drive system, and can suppress but not confer meiotic drive by compatible poisons. Wtf meiotic drive systems promote unequal transmission of alleles from the parental zygote to progeny spores by encoding a poison and an antidote from the same locus; the poison is trans-acting and forms toxic aggregates in all spores within an ascus, wherease the antidote is spore-specific and targets aggregates for degradation by the vacuole. Meiotic drive by wtf systems therefore lead to poisoning of all progeny that do not inherit the dual poison/antidote allele, or express a compatible antidote. This is Meiotic drive suppressor wtf20 from Schizosaccharomyces pombe (strain 972 / ATCC 24843) (Fission yeast).